A 308-amino-acid chain; its full sequence is Ribonuclease HIII (308 aa).

Residues 91-308 (KNVIGSDEVG…TEKALKMVKK (218 aa)) form the RNase H type-2 domain. A divalent metal cation contacts are provided by Asp-97, Glu-98, and Asp-202.

It belongs to the RNase HII family. RnhC subfamily. It depends on Mn(2+) as a cofactor. Mg(2+) is required as a cofactor.

Its subcellular location is the cytoplasm. The catalysed reaction is Endonucleolytic cleavage to 5'-phosphomonoester.. Its function is as follows. Endonuclease that specifically degrades the RNA of RNA-DNA hybrids. This Listeria monocytogenes serotype 4b (strain CLIP80459) protein is Ribonuclease HIII.